Here is a 325-residue protein sequence, read N- to C-terminus: Malate dehydrogenase (325 aa).

Residue 11–17 coordinates NAD(+); it reads GAAGQIA. The substrate site is built by arginine 92 and arginine 98. Residues asparagine 105, glutamine 112, and 129-131 each bind NAD(+); that span reads VGN. Substrate is bound by residues asparagine 131 and arginine 162. Histidine 187 acts as the Proton acceptor in catalysis.

Belongs to the LDH/MDH superfamily. MDH type 2 family.

The enzyme catalyses (S)-malate + NAD(+) = oxaloacetate + NADH + H(+). In terms of biological role, catalyzes the reversible oxidation of malate to oxaloacetate. In Methylococcus capsulatus (strain ATCC 33009 / NCIMB 11132 / Bath), this protein is Malate dehydrogenase.